Reading from the N-terminus, the 90-residue chain is Small ribosomal subunit protein bS16 (90 aa).

It belongs to the bacterial ribosomal protein bS16 family.

This is Small ribosomal subunit protein bS16 from Lactococcus lactis subsp. cremoris (strain SK11).